Reading from the N-terminus, the 357-residue chain is Endo-1,4-beta-xylanase Xyn11B (357 aa).

Residues 1 to 27 (MKIFQNTKNVIVSIAWAAALCTSAVSA) form the signal peptide. A GH11 domain is found at 29 to 226 (TLTSNSTGTN…SRGSSDITVS (198 aa)). Catalysis depends on Glu-116, which acts as the Nucleophile. Residue Glu-213 is the Proton donor of the active site. The tract at residues 220 to 245 (SSDITVSQGGSSGGGNSSSSSSASGG) is disordered.

Belongs to the glycosyl hydrolase 11 (cellulase G) family.

Its subcellular location is the secreted. The enzyme catalyses Endohydrolysis of (1-&gt;4)-beta-D-xylosidic linkages in xylans.. It functions in the pathway glycan degradation; xylan degradation. Endo-acting xylanase which specifically cleaves internal linkages on the xylan backbone, releasing xylooligosaccharides. Is able to hydrolyze glucuronoxylan and the arabinoxylan from wheat. This Cellvibrio japonicus (Pseudomonas fluorescens subsp. cellulosa) protein is Endo-1,4-beta-xylanase Xyn11B (xyn11B).